The following is a 274-amino-acid chain: Mitochondrial outer membrane protein porin 1 (274 aa).

This sequence belongs to the eukaryotic mitochondrial porin (TC 1.B.8.1) family. As to expression, expressed in shoots and roots. Also expressed in callus, leaves, panicles, sheaths and stems.

It localises to the mitochondrion outer membrane. Functionally, forms a channel through the mitochondrial outer membrane that allows diffusion of small hydrophilic molecules. The channel adopts an open conformation at low or zero membrane potential and a closed conformation at potentials above 30-40 mV. The open state has a weak anion selectivity whereas the closed state is cation-selective. The chain is Mitochondrial outer membrane protein porin 1 (VDAC1) from Oryza sativa subsp. japonica (Rice).